Reading from the N-terminus, the 434-residue chain is Methylenetetrahydrofolate--tRNA-(uracil-5-)-methyltransferase TrmFO (434 aa).

FAD is bound at residue 9–14 (GAGLAG).

It belongs to the MnmG family. TrmFO subfamily. Requires FAD as cofactor.

It localises to the cytoplasm. It carries out the reaction uridine(54) in tRNA + (6R)-5,10-methylene-5,6,7,8-tetrahydrofolate + NADH + H(+) = 5-methyluridine(54) in tRNA + (6S)-5,6,7,8-tetrahydrofolate + NAD(+). The catalysed reaction is uridine(54) in tRNA + (6R)-5,10-methylene-5,6,7,8-tetrahydrofolate + NADPH + H(+) = 5-methyluridine(54) in tRNA + (6S)-5,6,7,8-tetrahydrofolate + NADP(+). Functionally, catalyzes the folate-dependent formation of 5-methyl-uridine at position 54 (M-5-U54) in all tRNAs. The polypeptide is Methylenetetrahydrofolate--tRNA-(uracil-5-)-methyltransferase TrmFO (Bacillus pumilus (strain SAFR-032)).